Here is a 502-residue protein sequence, read N- to C-terminus: Glycerol kinase (502 aa).

Position 13 (threonine 13) interacts with ADP. The ATP site is built by threonine 13, threonine 14, and serine 15. Residue threonine 13 participates in sn-glycerol 3-phosphate binding. Residue arginine 17 participates in ADP binding. Residues arginine 83, glutamate 84, tyrosine 136, and aspartate 246 each contribute to the sn-glycerol 3-phosphate site. Residues arginine 83, glutamate 84, tyrosine 136, aspartate 246, and glutamine 247 each coordinate glycerol. Residues threonine 268 and glycine 311 each coordinate ADP. ATP is bound by residues threonine 268, glycine 311, glutamine 315, and glycine 412. Residues glycine 412 and asparagine 416 each coordinate ADP.

Belongs to the FGGY kinase family.

The catalysed reaction is glycerol + ATP = sn-glycerol 3-phosphate + ADP + H(+). The protein operates within polyol metabolism; glycerol degradation via glycerol kinase pathway; sn-glycerol 3-phosphate from glycerol: step 1/1. Inhibited by fructose 1,6-bisphosphate (FBP). Key enzyme in the regulation of glycerol uptake and metabolism. Catalyzes the phosphorylation of glycerol to yield sn-glycerol 3-phosphate. This chain is Glycerol kinase, found in Francisella tularensis subsp. mediasiatica (strain FSC147).